We begin with the raw amino-acid sequence, 397 residues long: ORC1-type DNA replication protein 8 (397 aa).

Residues 61–65 (VGKTA), Tyr-211, and Arg-223 each bind ATP.

The protein belongs to the CDC6/cdc18 family.

Its function is as follows. Involved in regulation of DNA replication. In Halobacterium salinarum (strain ATCC 700922 / JCM 11081 / NRC-1) (Halobacterium halobium), this protein is ORC1-type DNA replication protein 8 (orc8).